The chain runs to 351 residues: Small ribosomal subunit biogenesis GTPase RsgA (351 aa).

A CP-type G domain is found at 107–277; the sequence is ENLLQRPDNF…LIDSPGIREF (171 aa). Residues 163–166 and 219–227 each bind GTP; these read NKTD and GQSGVGKSS. 4 residues coordinate Zn(2+): Cys-301, Cys-306, His-308, and Cys-314.

Belongs to the TRAFAC class YlqF/YawG GTPase family. RsgA subfamily. In terms of assembly, monomer. Associates with 30S ribosomal subunit, binds 16S rRNA. It depends on Zn(2+) as a cofactor.

The protein localises to the cytoplasm. In terms of biological role, one of several proteins that assist in the late maturation steps of the functional core of the 30S ribosomal subunit. Helps release RbfA from mature subunits. May play a role in the assembly of ribosomal proteins into the subunit. Circularly permuted GTPase that catalyzes slow GTP hydrolysis, GTPase activity is stimulated by the 30S ribosomal subunit. The chain is Small ribosomal subunit biogenesis GTPase RsgA from Marinobacter nauticus (strain ATCC 700491 / DSM 11845 / VT8) (Marinobacter aquaeolei).